A 159-amino-acid polypeptide reads, in one-letter code: NADH-quinone oxidoreductase subunit B (159 aa).

Cys37, Cys38, Cys102, and Cys132 together coordinate [4Fe-4S] cluster.

The protein belongs to the complex I 20 kDa subunit family. In terms of assembly, NDH-1 is composed of 14 different subunits. Subunits NuoB, C, D, E, F, and G constitute the peripheral sector of the complex. [4Fe-4S] cluster serves as cofactor.

It is found in the cell inner membrane. The enzyme catalyses a quinone + NADH + 5 H(+)(in) = a quinol + NAD(+) + 4 H(+)(out). Functionally, NDH-1 shuttles electrons from NADH, via FMN and iron-sulfur (Fe-S) centers, to quinones in the respiratory chain. Couples the redox reaction to proton translocation (for every two electrons transferred, four hydrogen ions are translocated across the cytoplasmic membrane), and thus conserves the redox energy in a proton gradient. The chain is NADH-quinone oxidoreductase subunit B from Vesicomyosocius okutanii subsp. Calyptogena okutanii (strain HA).